We begin with the raw amino-acid sequence, 418 residues long: Delta(14)-sterol reductase TM7SF2 (418 aa).

A run of 6 helical transmembrane segments spans residues Phe-13 to Leu-35, Ala-62 to Ala-81, Gly-102 to Gly-124, Met-129 to Leu-148, Phe-255 to Phe-277, and Leu-287 to Phe-304. NADP(+) contacts are provided by residues Lys-311, Arg-315, Leu-338, Trp-343, and Asn-350–Tyr-351. The chain crosses the membrane as a helical span at residues Leu-355 to Leu-377. NADP(+) is bound by residues Asp-390, Cys-394–Tyr-398, and Tyr-405.

This sequence belongs to the ERG4/ERG24 family. In terms of tissue distribution, expressed in adult heart, brain, pancreas, lung, liver, skeletal muscle, kidney, ovary, prostate, testis and adrenal gland, but not detected in placenta, spleen, thymus, small intestine, colon (mucosal lining), or peripheral blood leukocytes.

The protein resides in the microsome membrane. It is found in the endoplasmic reticulum membrane. The enzyme catalyses 4,4-dimethyl-5alpha-cholesta-8,24-dien-3beta-ol + NADP(+) = 4,4-dimethyl-5alpha-cholesta-8,14,24-trien-3beta-ol + NADPH + H(+). It carries out the reaction 5alpha-cholest-8,14-dien-3beta-ol + NADPH + H(+) = 5alpha-cholest-8-en-3beta-ol + NADP(+). It catalyses the reaction 4,4-dimethyl-8,14-cholestadien-3beta-ol + NADPH + H(+) = 4,4-dimethyl-5alpha-cholest-8-en-3beta-ol + NADP(+). It functions in the pathway steroid biosynthesis; cholesterol biosynthesis. Its function is as follows. Catalyzes the reduction of the C14-unsaturated bond of lanosterol, as part of the metabolic pathway leading to cholesterol biosynthesis. The sequence is that of Delta(14)-sterol reductase TM7SF2 (TM7SF2) from Homo sapiens (Human).